We begin with the raw amino-acid sequence, 109 residues long: MALFFFLLLLISHREQLLLVQGHQMRDLLPTPRNRSNGRLPSPFSRVINPSTHLSIHKKALPRGERKLQDEYALDSRIHSRPDPLWNFRNLQKHSRKGLVMIFSKITRC.

Its subcellular location is the mitochondrion. This is an uncharacterized protein from Arabidopsis thaliana (Mouse-ear cress).